The chain runs to 328 residues: Malate dehydrogenase (328 aa).

11–17 (GAAGQIG) is a binding site for NAD(+). Substrate-binding residues include R92 and R98. Residues N105, Q112, and 129-131 (VGN) contribute to the NAD(+) site. Substrate-binding residues include N131 and R162. The Proton acceptor role is filled by H187.

It belongs to the LDH/MDH superfamily. MDH type 2 family.

It carries out the reaction (S)-malate + NAD(+) = oxaloacetate + NADH + H(+). In terms of biological role, catalyzes the reversible oxidation of malate to oxaloacetate. In Coxiella burnetii (strain CbuK_Q154) (Coxiella burnetii (strain Q154)), this protein is Malate dehydrogenase.